The following is a 194-amino-acid chain: MTNKDNPKFHTISTEYIDYLREADSKVPFNKDEQHSRPYVGVLEKINGHDYFVPLTSRNDKNFNSQVSVKLFDNDEKRIGVLLVNNMIPVPEKECKEIDIAEKTAADPQYGNLMLKQYLFLKENMDRVTNKVEKVYKDVTVQGKPSHKQKFLKGVCCDFPKLEEKCQEYKERDQAKERDKARRIAYMRQMGRER.

Residues 114–182 (MLKQYLFLKE…DQAKERDKAR (69 aa)) are a coiled coil. The segment covering 171 to 182 (ERDQAKERDKAR) has biased composition (basic and acidic residues). A disordered region spans residues 171-194 (ERDQAKERDKARRIAYMRQMGRER).

Belongs to the ToxN/AbiQ toxin family. As to quaternary structure, one ToxN monomer binds to a 34-nt-long single repeat of the ToxI RNA; this complex forms a triangular heterohexameric complex with ToxN connected by the ToxI RNA to another toxin molecule. The ToxI repeats are cleavage products of their precursor. The ToxI repeat forms a pseudoknot which occludes the toxin active site.

In terms of biological role, toxic component of a type III toxin-antitoxin (TA) system. An endoribonuclease which cleaves between the first and second A of AAAAA sequences; it tolerates other nucleotides in positions +2 and +4 of the consensus. Digests cognate antitoxin RNA ToxI as shown by the 2'-3'-cyclic phosphate at the 3' end of the 34-nt repeats and probably other RNAs. Inhibits growth when expressed in E.coli without causing cell lysis; this bacteriostatic effect is neutralized by cognate RNA antitoxin ToxI, which has 2.9 nearly identical 34 nucleotide-long repeats. Non-cognate antitoxin RNA from P.atrosepticum does not inhibit this toxin. The toxin-antitoxin pair function in plasmid maintenance (a plasmid addiction system), but unlike its P.atrosepticum homolog it is not seen to confer resistance to bacteriophages. The protein is Endoribonuclease ToxN of Bacillus thuringiensis subsp. kurstaki.